Here is a 78-residue protein sequence, read N- to C-terminus: Large ribosomal subunit protein bL28 (78 aa).

It belongs to the bacterial ribosomal protein bL28 family.

The chain is Large ribosomal subunit protein bL28 from Synechococcus sp. (strain CC9311).